The sequence spans 97 residues: Putative septation protein SpoVG (97 aa).

Belongs to the SpoVG family.

Functionally, could be involved in septation. In Anaeromyxobacter sp. (strain Fw109-5), this protein is Putative septation protein SpoVG.